Consider the following 351-residue polypeptide: Glycerol-3-phosphate dehydrogenase [NAD(P)+] (351 aa).

Residues Ser18, Trp19, Arg38, and Lys122 each coordinate NADPH. Sn-glycerol 3-phosphate contacts are provided by Lys122, Gly153, and Ser155. Residue Ala157 coordinates NADPH. Residues Lys208, Asp261, Ser271, Arg272, and Asn273 each contribute to the sn-glycerol 3-phosphate site. The active-site Proton acceptor is the Lys208. Arg272 serves as a coordination point for NADPH. Residue Glu297 coordinates NADPH.

This sequence belongs to the NAD-dependent glycerol-3-phosphate dehydrogenase family.

Its subcellular location is the cytoplasm. It carries out the reaction sn-glycerol 3-phosphate + NAD(+) = dihydroxyacetone phosphate + NADH + H(+). The catalysed reaction is sn-glycerol 3-phosphate + NADP(+) = dihydroxyacetone phosphate + NADPH + H(+). The protein operates within membrane lipid metabolism; glycerophospholipid metabolism. Its function is as follows. Catalyzes the reduction of the glycolytic intermediate dihydroxyacetone phosphate (DHAP) to sn-glycerol 3-phosphate (G3P), the key precursor for phospholipid synthesis. This chain is Glycerol-3-phosphate dehydrogenase [NAD(P)+], found in Bordetella pertussis (strain Tohama I / ATCC BAA-589 / NCTC 13251).